The following is a 197-amino-acid chain: Phosphoheptose isomerase (197 aa).

The SIS domain maps to 34–196 (MVHCLLGGNK…DRTLFPQDEQ (163 aa)). 49–51 (NGG) is a binding site for substrate. Positions 58 and 62 each coordinate Zn(2+). Residues Glu-62, 91 to 92 (ND), 117 to 119 (STS), Ser-122, and Gln-172 each bind substrate. Residues Gln-172 and His-180 each contribute to the Zn(2+) site.

The protein belongs to the SIS family. GmhA subfamily. In terms of assembly, homotetramer. It depends on Zn(2+) as a cofactor.

It is found in the cytoplasm. It carries out the reaction 2 D-sedoheptulose 7-phosphate = D-glycero-alpha-D-manno-heptose 7-phosphate + D-glycero-beta-D-manno-heptose 7-phosphate. The protein operates within carbohydrate biosynthesis; D-glycero-D-manno-heptose 7-phosphate biosynthesis; D-glycero-alpha-D-manno-heptose 7-phosphate and D-glycero-beta-D-manno-heptose 7-phosphate from sedoheptulose 7-phosphate: step 1/1. Its function is as follows. Catalyzes the isomerization of sedoheptulose 7-phosphate in D-glycero-D-manno-heptose 7-phosphate. In Shewanella sediminis (strain HAW-EB3), this protein is Phosphoheptose isomerase.